Here is a 360-residue protein sequence, read N- to C-terminus: DNA replication and repair protein RecF (360 aa).

30-37 (GQNGSGKT) is an ATP binding site.

Belongs to the RecF family.

The protein resides in the cytoplasm. In terms of biological role, the RecF protein is involved in DNA metabolism; it is required for DNA replication and normal SOS inducibility. RecF binds preferentially to single-stranded, linear DNA. It also seems to bind ATP. The protein is DNA replication and repair protein RecF of Shewanella frigidimarina (strain NCIMB 400).